The chain runs to 481 residues: GTPase Der (481 aa).

2 EngA-type G domains span residues 47-210 (PVLA…PDVS) and 221-394 (RRVA…ESWE). GTP is bound by residues 53–60 (GRPNVGKS), 100–104 (DTGGW), 162–165 (NKVD), 227–234 (GRPNVGKS), 274–278 (DTAGI), and 339–342 (NKWD). The KH-like domain occupies 395–477 (TRIPTGKFNA…PIVLNMRVRE (83 aa)).

It belongs to the TRAFAC class TrmE-Era-EngA-EngB-Septin-like GTPase superfamily. EngA (Der) GTPase family. As to quaternary structure, associates with the 50S ribosomal subunit.

GTPase that plays an essential role in the late steps of ribosome biogenesis. The protein is GTPase Der of Leifsonia xyli subsp. xyli (strain CTCB07).